Reading from the N-terminus, the 513-residue chain is Activin receptor type-2B (513 aa).

A signal peptide spans 1 to 18 (MTAPWAALALLWGSLCAG). The Extracellular portion of the chain corresponds to 19–137 (SGRGEAETRE…PPPTAPTLLT (119 aa)). 5 disulfide bridges follow: C29/C59, C49/C77, C84/C103, C90/C102, and C104/C109. N-linked (GlcNAc...) asparagine glycosylation is found at N42 and N65. Residues 138–158 (VLAYSLLPIGGLSLIVLLAFW) traverse the membrane as a helical segment. Topologically, residues 159 to 513 (MYRHRKPPYG…VDLLPKESSI (355 aa)) are cytoplasmic. In terms of domain architecture, Protein kinase spans 190-481 (LQLLEIKARG…AGCVEERVSL (292 aa)). ATP contacts are provided by residues 196 to 204 (KARGRFGCV) and K217. D322 acts as the Proton acceptor in catalysis. Residues 492-513 (DCLVSLVTSVTNVDLLPKESSI) are interaction with DYNLT1.

Belongs to the protein kinase superfamily. TKL Ser/Thr protein kinase family. TGFB receptor subfamily. Forms an activin receptor complex with activin type II receptors such as ACVR1B. Interacts with VPS39. Interacts with DYNLT1. Interacts with BMP3. Interacts with BMP2. The cofactor is Mg(2+). Mn(2+) is required as a cofactor. Post-translationally, phosphorylated. Constitutive phosphorylation is in part catalyzed by its own kinase activity.

It localises to the cell membrane. The enzyme catalyses L-threonyl-[receptor-protein] + ATP = O-phospho-L-threonyl-[receptor-protein] + ADP + H(+). The catalysed reaction is L-seryl-[receptor-protein] + ATP = O-phospho-L-seryl-[receptor-protein] + ADP + H(+). Transmembrane serine/threonine kinase activin type-2 receptor forming an activin receptor complex with activin type-1 serine/threonine kinase receptors (ACVR1, ACVR1B or ACVR1c). Transduces the activin signal from the cell surface to the cytoplasm and is thus regulating many physiological and pathological processes including neuronal differentiation and neuronal survival, hair follicle development and cycling, FSH production by the pituitary gland, wound healing, extracellular matrix production, immunosuppression and carcinogenesis. Activin is also thought to have a paracrine or autocrine role in follicular development in the ovary. Within the receptor complex, the type-2 receptors act as a primary activin receptors (binds activin-A/INHBA, activin-B/INHBB as well as inhibin-A/INHA-INHBA). The type-1 receptors like ACVR1B act as downstream transducers of activin signals. Activin binds to type-2 receptor at the plasma membrane and activates its serine-threonine kinase. The activated receptor type-2 then phosphorylates and activates the type-1 receptor. Once activated, the type-1 receptor binds and phosphorylates the SMAD proteins SMAD2 and SMAD3, on serine residues of the C-terminal tail. Soon after their association with the activin receptor and subsequent phosphorylation, SMAD2 and SMAD3 are released into the cytoplasm where they interact with the common partner SMAD4. This SMAD complex translocates into the nucleus where it mediates activin-induced transcription. Inhibitory SMAD7, which is recruited to ACVR1B through FKBP1A, can prevent the association of SMAD2 and SMAD3 with the activin receptor complex, thereby blocking the activin signal. Activin signal transduction is also antagonized by the binding to the receptor of inhibin-B via the IGSF1 inhibin coreceptor. This is Activin receptor type-2B (Acvr2b) from Rattus norvegicus (Rat).